Reading from the N-terminus, the 179-residue chain is Large ribosomal subunit protein uL5 (179 aa).

It belongs to the universal ribosomal protein uL5 family. In terms of assembly, part of the 50S ribosomal subunit; part of the 5S rRNA/L5/L18/L25 subcomplex. Contacts the 5S rRNA and the P site tRNA. Forms a bridge to the 30S subunit in the 70S ribosome.

In terms of biological role, this is one of the proteins that bind and probably mediate the attachment of the 5S RNA into the large ribosomal subunit, where it forms part of the central protuberance. In the 70S ribosome it contacts protein S13 of the 30S subunit (bridge B1b), connecting the 2 subunits; this bridge is implicated in subunit movement. Contacts the P site tRNA; the 5S rRNA and some of its associated proteins might help stabilize positioning of ribosome-bound tRNAs. In Dictyoglomus thermophilum (strain ATCC 35947 / DSM 3960 / H-6-12), this protein is Large ribosomal subunit protein uL5.